A 298-amino-acid chain; its full sequence is Elongation factor Ts (298 aa).

The tract at residues 78–81 is involved in Mg(2+) ion dislocation from EF-Tu; sequence TDFV.

It belongs to the EF-Ts family.

The protein localises to the cytoplasm. Associates with the EF-Tu.GDP complex and induces the exchange of GDP to GTP. It remains bound to the aminoacyl-tRNA.EF-Tu.GTP complex up to the GTP hydrolysis stage on the ribosome. This is Elongation factor Ts from Mycoplasmopsis agalactiae (strain NCTC 10123 / CIP 59.7 / PG2) (Mycoplasma agalactiae).